The primary structure comprises 270 residues: 4-hydroxy-tetrahydrodipicolinate reductase (270 aa).

NAD(+) contacts are provided by residues 8–13 and E34; that span reads GAAGRM. Position 35 (R35) interacts with NADP(+). NAD(+) is bound by residues 98–100 and 122–125; these read GST and SPNM. The active-site Proton donor/acceptor is H155. Position 156 (H156) interacts with (S)-2,3,4,5-tetrahydrodipicolinate. K159 serves as the catalytic Proton donor. (S)-2,3,4,5-tetrahydrodipicolinate is bound at residue 165 to 166; that stretch reads GT.

The protein belongs to the DapB family.

It localises to the cytoplasm. The catalysed reaction is (S)-2,3,4,5-tetrahydrodipicolinate + NAD(+) + H2O = (2S,4S)-4-hydroxy-2,3,4,5-tetrahydrodipicolinate + NADH + H(+). The enzyme catalyses (S)-2,3,4,5-tetrahydrodipicolinate + NADP(+) + H2O = (2S,4S)-4-hydroxy-2,3,4,5-tetrahydrodipicolinate + NADPH + H(+). The protein operates within amino-acid biosynthesis; L-lysine biosynthesis via DAP pathway; (S)-tetrahydrodipicolinate from L-aspartate: step 4/4. Catalyzes the conversion of 4-hydroxy-tetrahydrodipicolinate (HTPA) to tetrahydrodipicolinate. The polypeptide is 4-hydroxy-tetrahydrodipicolinate reductase (Anaeromyxobacter dehalogenans (strain 2CP-C)).